Reading from the N-terminus, the 705-residue chain is Solute carrier family 28 member 3 (705 aa).

Basic and acidic residues predominate over residues Met1–Leu21. Residues Met1–Gln96 are disordered. Residues Met1 to Gln119 lie on the Cytoplasmic side of the membrane. Polar residues predominate over residues Ala48–Glu63. Residues Gly65–Ile74 are compositionally biased toward basic and acidic residues. The chain crosses the membrane as a helical span at residues His120–Leu140. Over Asn141 to Ala145 the chain is Extracellular. A helical membrane pass occupies residues Leu146–Ala166. Over Lys167–Leu190 the chain is Cytoplasmic. Residues Lys191 to Ala211 form a helical membrane-spanning segment. The Extracellular segment spans residues Arg212–Gly214. The helical transmembrane segment at Gln215–Lys236 threads the bilayer. Residues His237 to Arg244 lie on the Cytoplasmic side of the membrane. Residues Pro245 to Arg264 form a helical membrane-spanning segment. The Extracellular portion of the chain corresponds to Pro265–Phe301. The chain crosses the membrane as a helical span at residues Ala302–Leu322. The Cytoplasmic portion of the chain corresponds to Gly323–Glu346. The helical intramembrane region spans Ser347–Val365. Topologically, residues Gln366 to His378 are cytoplasmic. Residues Thr379–Val401 form a helical membrane-spanning segment. The Extracellular segment spans residues Ser402–Ser403. A helical transmembrane segment spans residues Thr404 to Trp425. Over Pro426 to Ser460 the chain is Cytoplasmic. Residues Ile461–Ser486 traverse the membrane as a helical segment. The Extracellular portion of the chain corresponds to Trp487 to Val524. The segment at residues Ala525 to Ser544 is an intramembrane region (helical). Over Lys545–Phe583 the chain is Extracellular. Residues Gly584–Thr594 traverse the membrane as a helical segment. At Ser595–Gly607 the chain is on the cytoplasmic side. Residues Ala608–Ser630 form a helical membrane-spanning segment. The Extracellular segment spans residues Asp631–Pro705.

This sequence belongs to the concentrative nucleoside transporter (CNT) (TC 2.A.41) family. As to quaternary structure, homotrimer. Expressed in kidney; in the proximal tubule, glomerulus and cortical collecting duct.

The protein localises to the cell membrane. The enzyme catalyses thymidine(out) + 2 Na(+)(out) = thymidine(in) + 2 Na(+)(in). The catalysed reaction is cytidine(out) + 2 Na(+)(out) = cytidine(in) + 2 Na(+)(in). It catalyses the reaction uridine(out) + 2 Na(+)(out) = uridine(in) + 2 Na(+)(in). It carries out the reaction adenosine(out) + 2 Na(+)(out) = adenosine(in) + 2 Na(+)(in). The enzyme catalyses guanosine(out) + 2 Na(+)(out) = guanosine(in) + 2 Na(+)(in). The catalysed reaction is inosine(out) + 2 Na(+)(out) = inosine(in) + 2 Na(+)(in). Functionally, sodium-dependent, pyrimidine- and purine-selective. Involved in the homeostasis of endogenous nucleosides. Exhibits the transport characteristics of the nucleoside transport system cib or N3 subtype (N3/cib) (with marked transport of both thymidine and inosine). Employs a 2:1 sodium/nucleoside ratio. Also able to transport gemcitabine, 3'-azido-3'-deoxythymidine (AZT), ribavirin and 3-deazauridine. The protein is Solute carrier family 28 member 3 (Slc28a3) of Rattus norvegicus (Rat).